Consider the following 264-residue polypeptide: Thymidylate synthase (264 aa).

DUMP is bound by residues R21 and 126 to 127 (RR). The active-site Nucleophile is C146. Residues 166 to 169 (RSAD), N177, and 207 to 209 (HLY) contribute to the dUMP site. D169 contacts (6R)-5,10-methylene-5,6,7,8-tetrahydrofolate. A263 contacts (6R)-5,10-methylene-5,6,7,8-tetrahydrofolate.

Belongs to the thymidylate synthase family. Bacterial-type ThyA subfamily. In terms of assembly, homodimer.

It localises to the cytoplasm. It carries out the reaction dUMP + (6R)-5,10-methylene-5,6,7,8-tetrahydrofolate = 7,8-dihydrofolate + dTMP. Its pathway is pyrimidine metabolism; dTTP biosynthesis. Functionally, catalyzes the reductive methylation of 2'-deoxyuridine-5'-monophosphate (dUMP) to 2'-deoxythymidine-5'-monophosphate (dTMP) while utilizing 5,10-methylenetetrahydrofolate (mTHF) as the methyl donor and reductant in the reaction, yielding dihydrofolate (DHF) as a by-product. This enzymatic reaction provides an intracellular de novo source of dTMP, an essential precursor for DNA biosynthesis. In Rhodopseudomonas palustris (strain ATCC BAA-98 / CGA009), this protein is Thymidylate synthase.